The primary structure comprises 204 residues: Urease accessory protein UreG (204 aa).

Residue 12–19 (GPVGSGKT) coordinates GTP.

This sequence belongs to the SIMIBI class G3E GTPase family. UreG subfamily. In terms of assembly, homodimer. UreD, UreF and UreG form a complex that acts as a GTP-hydrolysis-dependent molecular chaperone, activating the urease apoprotein by helping to assemble the nickel containing metallocenter of UreC. The UreE protein probably delivers the nickel.

Its subcellular location is the cytoplasm. In terms of biological role, facilitates the functional incorporation of the urease nickel metallocenter. This process requires GTP hydrolysis, probably effectuated by UreG. The chain is Urease accessory protein UreG from Pseudomonas fluorescens (strain SBW25).